The chain runs to 131 residues: SPbeta prophage-derived uncharacterized protein YomZ (131 aa).

The chain is SPbeta prophage-derived uncharacterized protein YomZ (yomZ) from Bacillus subtilis (strain 168).